The primary structure comprises 229 residues: 4-hydroxy-tetrahydrodipicolinate reductase (229 aa).

NAD(+) contacts are provided by residues 10 to 15, 78 to 80, and 102 to 105; these read GSAGRM, GTT, and SSNM. His-133 serves as the catalytic Proton donor/acceptor. His-134 contributes to the (S)-2,3,4,5-tetrahydrodipicolinate binding site. The Proton donor role is filled by Lys-137. 143–144 serves as a coordination point for (S)-2,3,4,5-tetrahydrodipicolinate; it reads GT.

The protein belongs to the DapB family.

It localises to the cytoplasm. The catalysed reaction is (S)-2,3,4,5-tetrahydrodipicolinate + NAD(+) + H2O = (2S,4S)-4-hydroxy-2,3,4,5-tetrahydrodipicolinate + NADH + H(+). It catalyses the reaction (S)-2,3,4,5-tetrahydrodipicolinate + NADP(+) + H2O = (2S,4S)-4-hydroxy-2,3,4,5-tetrahydrodipicolinate + NADPH + H(+). The protein operates within amino-acid biosynthesis; L-lysine biosynthesis via DAP pathway; (S)-tetrahydrodipicolinate from L-aspartate: step 4/4. In terms of biological role, catalyzes the conversion of 4-hydroxy-tetrahydrodipicolinate (HTPA) to tetrahydrodipicolinate. The polypeptide is 4-hydroxy-tetrahydrodipicolinate reductase (Bdellovibrio bacteriovorus (strain ATCC 15356 / DSM 50701 / NCIMB 9529 / HD100)).